Reading from the N-terminus, the 232-residue chain is Large ribosomal subunit protein uL1 (232 aa).

The protein belongs to the universal ribosomal protein uL1 family. Part of the 50S ribosomal subunit.

Functionally, binds directly to 23S rRNA. The L1 stalk is quite mobile in the ribosome, and is involved in E site tRNA release. Protein L1 is also a translational repressor protein, it controls the translation of the L11 operon by binding to its mRNA. The chain is Large ribosomal subunit protein uL1 from Stenotrophomonas maltophilia (strain R551-3).